The sequence spans 189 residues: MFWSLALLAYLLGSLSFAIVLSRLTGSPDPRSSGSGNAGATNMLRLAGRKLAILTLLGDLCKGMLPVLLARQVGLDPQEQAWVGICAVLGHLFPVYFRFQGGKGVATAAGMLMALYFPAALLAIGAWVLTFYLTRTSSLAALIATPLTLPLLAWREPEALLPMTVLTLMIVWRHRSNLRDLFAGRERHF.

Transmembrane regions (helical) follow at residues 1-21, 50-70, 81-101, 111-131, and 151-171; these read MFWS…AIVL, KLAI…VLLA, AWVG…RFQG, MLMA…VLTF, and LLAW…LMIV.

Belongs to the PlsY family. Probably interacts with PlsX.

The protein resides in the cell inner membrane. The catalysed reaction is an acyl phosphate + sn-glycerol 3-phosphate = a 1-acyl-sn-glycero-3-phosphate + phosphate. It functions in the pathway lipid metabolism; phospholipid metabolism. Functionally, catalyzes the transfer of an acyl group from acyl-phosphate (acyl-PO(4)) to glycerol-3-phosphate (G3P) to form lysophosphatidic acid (LPA). This enzyme utilizes acyl-phosphate as fatty acyl donor, but not acyl-CoA or acyl-ACP. This is Glycerol-3-phosphate acyltransferase from Pseudomonas entomophila (strain L48).